Here is a 262-residue protein sequence, read N- to C-terminus: Matrix protein (262 aa).

The segment at P219–T243 is disordered.

Belongs to the nucleorhabdovirus type-1 matrix protein family. Homomultimer. Interacts with nucleoprotein and with the cytoplasmic domain of glycoprotein.

The protein resides in the virion membrane. The protein localises to the host endomembrane system. In terms of biological role, plays a major role in assembly and budding of virion. Completely covers the ribonucleoprotein coil and keep it in condensed bullet-shaped form. Inhibits viral transcription and stimulates replication. In Rice yellow stunt virus (RYSV), this protein is Matrix protein (M).